The primary structure comprises 615 residues: Dihydroxy-acid dehydratase (615 aa).

D81 lines the Mg(2+) pocket. A [2Fe-2S] cluster-binding site is contributed by C122. 2 residues coordinate Mg(2+): D123 and K124. K124 carries the post-translational modification N6-carboxylysine. C195 is a binding site for [2Fe-2S] cluster. Residue E491 coordinates Mg(2+). The active-site Proton acceptor is S517.

The protein belongs to the IlvD/Edd family. Homodimer. Requires [2Fe-2S] cluster as cofactor. Mg(2+) is required as a cofactor.

The enzyme catalyses (2R)-2,3-dihydroxy-3-methylbutanoate = 3-methyl-2-oxobutanoate + H2O. It carries out the reaction (2R,3R)-2,3-dihydroxy-3-methylpentanoate = (S)-3-methyl-2-oxopentanoate + H2O. Its pathway is amino-acid biosynthesis; L-isoleucine biosynthesis; L-isoleucine from 2-oxobutanoate: step 3/4. It participates in amino-acid biosynthesis; L-valine biosynthesis; L-valine from pyruvate: step 3/4. Functions in the biosynthesis of branched-chain amino acids. Catalyzes the dehydration of (2R,3R)-2,3-dihydroxy-3-methylpentanoate (2,3-dihydroxy-3-methylvalerate) into 2-oxo-3-methylpentanoate (2-oxo-3-methylvalerate) and of (2R)-2,3-dihydroxy-3-methylbutanoate (2,3-dihydroxyisovalerate) into 2-oxo-3-methylbutanoate (2-oxoisovalerate), the penultimate precursor to L-isoleucine and L-valine, respectively. This is Dihydroxy-acid dehydratase from Pseudoalteromonas atlantica (strain T6c / ATCC BAA-1087).